The sequence spans 1114 residues: WD repeat-containing protein 72 (1114 aa).

7 WD repeats span residues 15-54 (APPHSITAIMITDDQQTIVTGSQEGQLCLWSLSPELKISA), 60-102 (GHSA…CVEK), 160-197 (KCMCIVHSVRIQEDSLLVVSITGELKVWDLSSSINSIQ), 327-373 (EENK…SKFD), 413-452 (GMTATITSSEYIPNLDKLICGCEDGTIFITKALNAAKAGL), 470-515 (GHHQ…ILHT), and 566-605 (KHLFPVRMIRWHPVENFLIVGCTDDSVYIWEIETGTLERH). Disordered regions lie at residues 634 to 658 (SETHKHKSIEQKSSNSHQPGPVPCP) and 749 to 798 (SLQT…PPRK). Positions 780–796 (KRQKKMKSSKKAHPKPP) are enriched in basic residues. Ser-1093 and Ser-1095 each carry phosphoserine.

Expressed in maturation stage ameloblasts (at protein level).

It localises to the cytoplasmic vesicle. Its function is as follows. Plays a major role in formation of tooth enamel. Specifically required during the maturation phase of amelogenesis for normal formation of the enamel matrix and clearance of enamel proteins. May be involved in localization of the calcium transporter SLC24A4 to the ameloblast cell membrane. The sequence is that of WD repeat-containing protein 72 from Mus musculus (Mouse).